An 868-amino-acid polypeptide reads, in one-letter code: Leucine--tRNA ligase (868 aa).

The 'HIGH' region signature appears at 42 to 52 (PYPSGKLHMGH). A 'KMSKS' region motif is present at residues 627–631 (KMSKS). An ATP-binding site is contributed by Lys630.

It belongs to the class-I aminoacyl-tRNA synthetase family.

The protein localises to the cytoplasm. It catalyses the reaction tRNA(Leu) + L-leucine + ATP = L-leucyl-tRNA(Leu) + AMP + diphosphate. The chain is Leucine--tRNA ligase from Pseudomonas putida (strain ATCC 47054 / DSM 6125 / CFBP 8728 / NCIMB 11950 / KT2440).